A 589-amino-acid polypeptide reads, in one-letter code: RNA-directed RNA polymerase subunit beta (589 aa).

Positions 259-391 constitute a RdRp catalytic domain; the sequence is RRAHEGSVTN…TNTKKTFSEG (133 aa). Asp-274, Asp-359, and Asp-360 together coordinate Mg(2+).

As to quaternary structure, homodimer; the replicase complex can dimerize. Part of the viral RNA-dependent RNA polymerase complex, the other subunits are the host ribosomal protein S1, EF-Tu and EF-Ts. S1 is needed for the initiation of genomic RNA (+)-strand replication. Requires Mg(2+) as cofactor.

It carries out the reaction RNA(n) + a ribonucleoside 5'-triphosphate = RNA(n+1) + diphosphate. Its function is as follows. This is the catalytic subunit of the viral RNA-dependent RNA polymerase complex. This complex is involved in viral RNA replication that produces (+)-stranded genomes via a complementary, (-)-stranded intermediate. Binds RNA cooperatively with the host ribosomal protein S1. The sequence is that of RNA-directed RNA polymerase subunit beta from Escherichia coli (Bacteriophage Q-beta).